The chain runs to 614 residues: Fructokinase-like 2, chloroplastic (614 aa).

The N-terminal 44 residues, 1-44, are a transit peptide targeting the chloroplast; it reads MASLSFTQFLSFPRCNADVPCLLQSHGFVKFRGERWNGKQSFSM. Disordered regions lie at residues 47–75 and 542–592; these read GRRKLSESAPLEEEGNDGNGAVVGKKPSK and GYPP…YVMK. Acidic residues predominate over residues 548–563; that stretch reads DMEEEEDDEEEDEVES. The segment covering 571-583 has biased composition (basic and acidic residues); sequence ITEKEYRTSKPYD.

It belongs to the carbohydrate kinase PfkB family. Interacts with CITRX/TRXz. Binds to FLN1 and PTAC5. Associates with the plastid-encoded RNA polymerase (PEP) complex.

It is found in the plastid. It localises to the chloroplast. Required for proper chloroplast development, most likely through regulating plastid-encoded polymerase (PEP) dependent chloroplast transcription. Acts as a component of the transcriptionally active plastid chromosome that is required for plastid gene expression. This chain is Fructokinase-like 2, chloroplastic, found in Arabidopsis thaliana (Mouse-ear cress).